We begin with the raw amino-acid sequence, 397 residues long: Tyrosine--tRNA ligase (397 aa).

The short motif at 39 to 48 is the 'HIGH' region element; the sequence is PTAPDLHLGH. A 'KMSKS' region motif is present at residues 223–227; that stretch reads KMSKS. ATP is bound at residue Lys226. An S4 RNA-binding domain is found at 334 to 395; the sequence is YPIANLVHDL…GKRKFAKIRL (62 aa).

This sequence belongs to the class-I aminoacyl-tRNA synthetase family. TyrS type 2 subfamily. As to quaternary structure, homodimer.

Its subcellular location is the cytoplasm. It catalyses the reaction tRNA(Tyr) + L-tyrosine + ATP = L-tyrosyl-tRNA(Tyr) + AMP + diphosphate + H(+). Functionally, catalyzes the attachment of tyrosine to tRNA(Tyr) in a two-step reaction: tyrosine is first activated by ATP to form Tyr-AMP and then transferred to the acceptor end of tRNA(Tyr). This chain is Tyrosine--tRNA ligase, found in Methylococcus capsulatus (strain ATCC 33009 / NCIMB 11132 / Bath).